A 404-amino-acid polypeptide reads, in one-letter code: Tryptophan synthase beta chain (404 aa).

Lysine 95 is subject to N6-(pyridoxal phosphate)lysine.

Belongs to the TrpB family. Tetramer of two alpha and two beta chains. The cofactor is pyridoxal 5'-phosphate.

The enzyme catalyses (1S,2R)-1-C-(indol-3-yl)glycerol 3-phosphate + L-serine = D-glyceraldehyde 3-phosphate + L-tryptophan + H2O. It functions in the pathway amino-acid biosynthesis; L-tryptophan biosynthesis; L-tryptophan from chorismate: step 5/5. Its function is as follows. The beta subunit is responsible for the synthesis of L-tryptophan from indole and L-serine. The protein is Tryptophan synthase beta chain (trpB) of Thermus thermophilus (strain ATCC BAA-163 / DSM 7039 / HB27).